A 328-amino-acid polypeptide reads, in one-letter code: 4-hydroxy-2-oxoglutarate aldolase, mitochondrial (328 aa).

The N-terminal 26 residues, 1–26 (MFGRTLFPARVIALGSGLFRTPLRTL), are a transit peptide targeting the mitochondrion. 76–77 (SN) serves as a coordination point for substrate. Catalysis depends on K195, which acts as the Schiff-base intermediate with substrate. Substrate is bound by residues S197 and G221.

Belongs to the DapA family. Homotetramer.

The protein localises to the mitochondrion. It carries out the reaction (4S)-4-hydroxy-2-oxoglutarate = glyoxylate + pyruvate. The enzyme catalyses (4R)-4-hydroxy-2-oxoglutarate = glyoxylate + pyruvate. Its activity is regulated as follows. Inhibited by divalent cations. In terms of biological role, catalyzes the final step in the metabolic pathway of hydroxyproline. The sequence is that of 4-hydroxy-2-oxoglutarate aldolase, mitochondrial (hoga1) from Xenopus tropicalis (Western clawed frog).